Consider the following 170-residue polypeptide: ATP synthase subunit b (170 aa).

The helical transmembrane segment at 25–45 (LIPNGTFFAVLIIFLIVLGVI) threads the bilayer. The disordered stretch occupies residues 121-147 (EVAQTLTQADQQLSAQGDQVRSGLESS). The span at 122 to 139 (VAQTLTQADQQLSAQGDQ) shows a compositional bias: polar residues.

Belongs to the ATPase B chain family. In terms of assembly, F-type ATPases have 2 components, F(1) - the catalytic core - and F(0) - the membrane proton channel. F(1) has five subunits: alpha(3), beta(3), gamma(1), delta(1), epsilon(1). F(0) has three main subunits: a(1), b(2) and c(10-14). The alpha and beta chains form an alternating ring which encloses part of the gamma chain. F(1) is attached to F(0) by a central stalk formed by the gamma and epsilon chains, while a peripheral stalk is formed by the delta and b chains.

It is found in the cell membrane. In terms of biological role, f(1)F(0) ATP synthase produces ATP from ADP in the presence of a proton or sodium gradient. F-type ATPases consist of two structural domains, F(1) containing the extramembraneous catalytic core and F(0) containing the membrane proton channel, linked together by a central stalk and a peripheral stalk. During catalysis, ATP synthesis in the catalytic domain of F(1) is coupled via a rotary mechanism of the central stalk subunits to proton translocation. Its function is as follows. Component of the F(0) channel, it forms part of the peripheral stalk, linking F(1) to F(0). In Mycolicibacterium smegmatis (strain ATCC 700084 / mc(2)155) (Mycobacterium smegmatis), this protein is ATP synthase subunit b.